The following is a 262-amino-acid chain: Putative cysteine-rich repeat secretory protein 24 (262 aa).

A signal peptide spans 1–29 (MSLSSSVTKHLISASILAIVAMQLPSVHS). Gnk2-homologous domains follow at residues 39 to 141 (YLHH…SIYT) and 147 to 259 (YKNN…LYPF).

It belongs to the cysteine-rich repeat secretory protein family.

The protein localises to the secreted. This chain is Putative cysteine-rich repeat secretory protein 24 (CRRSP24), found in Arabidopsis thaliana (Mouse-ear cress).